Here is a 208-residue protein sequence, read N- to C-terminus: Outer-membrane lipoprotein carrier protein (208 aa).

The N-terminal stretch at 1–25 is a signal peptide; it reads MKKRFSAKLFSALVLSISFFSAANA.

Belongs to the LolA family. In terms of assembly, monomer.

It is found in the periplasm. Participates in the translocation of lipoproteins from the inner membrane to the outer membrane. Only forms a complex with a lipoprotein if the residue after the N-terminal Cys is not an aspartate (The Asp acts as a targeting signal to indicate that the lipoprotein should stay in the inner membrane). The protein is Outer-membrane lipoprotein carrier protein of Vibrio parahaemolyticus serotype O3:K6 (strain RIMD 2210633).